Consider the following 313-residue polypeptide: Biotin synthase (313 aa).

One can recognise a Radical SAM core domain in the interval 28 to 258; sequence NFGNDIELCS…LFPQARLRLS (231 aa). [4Fe-4S] cluster-binding residues include Cys46, Cys50, and Cys53. [2Fe-2S] cluster is bound by residues Cys90, Cys121, Cys181, and Arg256.

This sequence belongs to the radical SAM superfamily. Biotin synthase family. As to quaternary structure, homodimer. [4Fe-4S] cluster is required as a cofactor. [2Fe-2S] cluster serves as cofactor.

The enzyme catalyses (4R,5S)-dethiobiotin + (sulfur carrier)-SH + 2 reduced [2Fe-2S]-[ferredoxin] + 2 S-adenosyl-L-methionine = (sulfur carrier)-H + biotin + 2 5'-deoxyadenosine + 2 L-methionine + 2 oxidized [2Fe-2S]-[ferredoxin]. Its pathway is cofactor biosynthesis; biotin biosynthesis; biotin from 7,8-diaminononanoate: step 2/2. In terms of biological role, catalyzes the conversion of dethiobiotin (DTB) to biotin by the insertion of a sulfur atom into dethiobiotin via a radical-based mechanism. The polypeptide is Biotin synthase (Francisella tularensis subsp. holarctica (strain FTNF002-00 / FTA)).